Reading from the N-terminus, the 745-residue chain is Aminopeptidase NAALADL1 (745 aa).

Over 1-6 the chain is Cytoplasmic; that stretch reads MHWVKI. A helical; Signal-anchor for type II membrane protein transmembrane segment spans residues 7-28; that stretch reads LGVALGAAALLGLGIILGHFAI. The Extracellular segment spans residues 29–745; the sequence is PKATSPLTSS…AATLVPVADL (717 aa). N-linked (GlcNAc...) asparagine glycosylation is found at Asn-128, Asn-141, and Asn-235. Ca(2+) contacts are provided by Thr-263 and Leu-266. N-linked (GlcNAc...) asparagine glycans are attached at residues Asn-279, Asn-302, and Asn-329. A disulfide bond links Cys-301 and Cys-318. Residues His-373 and Asp-383 each contribute to the Zn(2+) site. Residue Glu-421 is the Proton donor/acceptor of the active site. Position 422 (Glu-422) interacts with Zn(2+). 2 residues coordinate Ca(2+): Glu-430 and Glu-433. Asp-450 serves as a coordination point for Zn(2+). 2 N-linked (GlcNAc...) asparagine glycosylation sites follow: Asn-456 and Asn-497. Residue His-550 coordinates Zn(2+). N-linked (GlcNAc...) asparagine glycans are attached at residues Asn-593 and Asn-620.

It belongs to the peptidase M28 family. M28B subfamily. Homodimer. Zn(2+) serves as cofactor. In terms of processing, N-glycosylated.

Its subcellular location is the apical cell membrane. In terms of biological role, aminopeptidase with broad substrate specificity. Has lower activity with substrates that have Asp or Glu in the P2' position, or Pro in the P3' position. Lacks activity with substrates that have both Pro in the P3' position and Asp or Glu in the P2' position. Lacks carboxypeptidase activity. Lacks dipeptidyl-peptidase IV type activity. The polypeptide is Aminopeptidase NAALADL1 (Naaladl1) (Mus musculus (Mouse)).